The chain runs to 326 residues: GTP 3',8-cyclase (326 aa).

Residues 6-220 (SFGRRINYLR…DRISASYELE (215 aa)) form the Radical SAM core domain. Residue Arg15 participates in GTP binding. [4Fe-4S] cluster contacts are provided by Cys22 and Cys26. An S-adenosyl-L-methionine-binding site is contributed by Tyr28. Cys29 contacts [4Fe-4S] cluster. Residue Arg65 coordinates GTP. An S-adenosyl-L-methionine-binding site is contributed by Gly69. Thr96 is a binding site for GTP. Ser120 is a binding site for S-adenosyl-L-methionine. Lys157 is a binding site for GTP. S-adenosyl-L-methionine is bound at residue Met191. [4Fe-4S] cluster-binding residues include Cys254 and Cys257. 259–261 (RVR) is a binding site for GTP. Cys271 is a binding site for [4Fe-4S] cluster.

Belongs to the radical SAM superfamily. MoaA family. As to quaternary structure, monomer and homodimer. [4Fe-4S] cluster is required as a cofactor.

It catalyses the reaction GTP + AH2 + S-adenosyl-L-methionine = (8S)-3',8-cyclo-7,8-dihydroguanosine 5'-triphosphate + 5'-deoxyadenosine + L-methionine + A + H(+). The protein operates within cofactor biosynthesis; molybdopterin biosynthesis. In terms of biological role, catalyzes the cyclization of GTP to (8S)-3',8-cyclo-7,8-dihydroguanosine 5'-triphosphate. In Geobacter sulfurreducens (strain ATCC 51573 / DSM 12127 / PCA), this protein is GTP 3',8-cyclase.